Reading from the N-terminus, the 158-residue chain is Snaclec agglucetin subunit alpha-2 (158 aa).

Positions 1 to 23 (MGRFIFVSFGLLVVFLSLSGTGA) are cleaved as a signal peptide. 3 disulfides stabilise this stretch: C27–C38, C55–C152, and C127–C144. A C-type lectin domain is found at 34 to 153 (YDQYCYQVIK…CIQLNPFVCK (120 aa)).

It belongs to the snaclec family. Heterotetramer of the subunits alpha-1, alpha-2, beta-1 and beta-2; disulfide-linked. In terms of tissue distribution, expressed by the venom gland.

It is found in the secreted. Functionally, agglucetin specifically causes platelet aggregation and surface exposure of integrin alpha-IIb/beta-3 with a GPIb-(GP1BA-) dependent manner in washed platelets. It binds to human platelets in a saturable manner, and its binding is specifically blocked by anti-GP Ib mAb. It regulates endothelial cell survival and promotes angiogenesis by activating integrin alpha-v/beta-3 signaling through FAK/phosphatidylinositol 3-kinase (PI3K)/Akt pathway. This Deinagkistrodon acutus (Hundred-pace snake) protein is Snaclec agglucetin subunit alpha-2.